We begin with the raw amino-acid sequence, 302 residues long: Myb-related protein Hv33 (302 aa).

HTH myb-type domains are found at residues 11–63 and 64–118; these read QPKV…INYL and RPDL…KKKL. 2 DNA-binding regions (H-T-H motif) span residues 39 to 63 and 91 to 114; these read WSSVPRLAALNRCGKSCRLRWINYL and WSQIASHLPGRTDNEIKNFWNSCI. The segment at 137–158 is disordered; it reads ATAAAALPDAEEEDRKPLCPAV.

Germinating seed and apical meristem of shoot and root.

The protein resides in the nucleus. Its function is as follows. Possible transcription activator in response to an external signal. May be involved in the regulation of flavonoid biosynthesis. The sequence is that of Myb-related protein Hv33 (MYB2) from Hordeum vulgare (Barley).